The following is a 364-amino-acid chain: Ribosomal RNA large subunit methyltransferase F (364 aa).

The tract at residues 1-28 is disordered; it reads MTNKRKSAKPLEPAKRTPKLRTKKSRDL.

Belongs to the methyltransferase superfamily. METTL16/RlmF family.

It is found in the cytoplasm. It carries out the reaction adenosine(1618) in 23S rRNA + S-adenosyl-L-methionine = N(6)-methyladenosine(1618) in 23S rRNA + S-adenosyl-L-homocysteine + H(+). Its function is as follows. Specifically methylates the adenine in position 1618 of 23S rRNA. This Vibrio vulnificus (strain YJ016) protein is Ribosomal RNA large subunit methyltransferase F.